A 193-amino-acid polypeptide reads, in one-letter code: uncharacterized protein (193 aa).

This is an uncharacterized protein from Acidianus convivator (ATV).